A 437-amino-acid chain; its full sequence is MNNMQLKATSPLAEWLSYLEKSHFKPIDLGLDRIKSVAEKLDLLHPVPYVITVGGTNGKGTTCRLLETILLNHGLRVGVYSSPHLLRYNERVRIQNQDLPDEAHTASFAFIDENKTESLTYFEFSTLSALHLFKQAKLDVVILEVGLGGRLDATNIVDSHLAVITSIDIDHTDFLGDTREAIAFEKAGIFRENCPVVIGEPNVPQTMLDQAEKLHCQVARRDVDWLFEQNAENWQWQNKKVRLENLPFCQIPLANAATVLAAVQYLPFDISEQTLRKSLQEVELVGRFQAIKTDKREKLADYLGVPVETLPTIIVDVGHNPHAAKYLSEKLTALKRSIEGKMIAVCGMLKDKDANGVFEHLTPIIDEWHCVTLGGYRGQSGDELVEKLKSHFPNIQATSDNSVMDGVCTALKSAVKNDVVLVFGSFHTVAEFWAVVE.

Position 28-30 (28-30) interacts with 7,8-dihydropteroate; the sequence is DLG. Residue 58-61 coordinates ATP; the sequence is GKGT. Ser-82 contributes to the Mg(2+) binding site. 120-123 lines the 7,8-dihydropteroate pocket; that stretch reads TYFE. Residue Glu-144 coordinates Mg(2+). 151–153 is a binding site for 7,8-dihydropteroate; the sequence is LDA. His-171 lines the Mg(2+) pocket. Positions 255, 287, and 316 each coordinate ATP.

Belongs to the folylpolyglutamate synthase family. In terms of assembly, monomer. Mg(2+) is required as a cofactor.

The catalysed reaction is 7,8-dihydropteroate + L-glutamate + ATP = 7,8-dihydrofolate + ADP + phosphate + H(+). The enzyme catalyses (6S)-5,6,7,8-tetrahydrofolyl-(gamma-L-Glu)(n) + L-glutamate + ATP = (6S)-5,6,7,8-tetrahydrofolyl-(gamma-L-Glu)(n+1) + ADP + phosphate + H(+). It catalyses the reaction 10-formyltetrahydrofolyl-(gamma-L-Glu)(n) + L-glutamate + ATP = 10-formyltetrahydrofolyl-(gamma-L-Glu)(n+1) + ADP + phosphate + H(+). It carries out the reaction (6R)-5,10-methylenetetrahydrofolyl-(gamma-L-Glu)(n) + L-glutamate + ATP = (6R)-5,10-methylenetetrahydrofolyl-(gamma-L-Glu)(n+1) + ADP + phosphate + H(+). The protein operates within cofactor biosynthesis; tetrahydrofolate biosynthesis; 7,8-dihydrofolate from 2-amino-4-hydroxy-6-hydroxymethyl-7,8-dihydropteridine diphosphate and 4-aminobenzoate: step 2/2. It functions in the pathway cofactor biosynthesis; tetrahydrofolylpolyglutamate biosynthesis. Its function is as follows. Functions in two distinct reactions of the de novo folate biosynthetic pathway. Catalyzes the addition of a glutamate residue to dihydropteroate (7,8-dihydropteroate or H2Pte) to form dihydrofolate (7,8-dihydrofolate monoglutamate or H2Pte-Glu). Also catalyzes successive additions of L-glutamate to tetrahydrofolate or 10-formyltetrahydrofolate or 5,10-methylenetetrahydrofolate, leading to folylpolyglutamate derivatives. This chain is Dihydrofolate synthase/folylpolyglutamate synthase (folC), found in Haemophilus influenzae (strain ATCC 51907 / DSM 11121 / KW20 / Rd).